Consider the following 80-residue polypeptide: uncharacterized protein (80 aa).

This is an uncharacterized protein from Schizosaccharomyces pombe (strain 972 / ATCC 24843) (Fission yeast).